A 169-amino-acid chain; its full sequence is Holo-[acyl-carrier-protein] synthase (169 aa).

Mg(2+) is bound by residues D8 and E50.

The protein belongs to the P-Pant transferase superfamily. AcpS family. Requires Mg(2+) as cofactor.

Its subcellular location is the cytoplasm. The enzyme catalyses apo-[ACP] + CoA = holo-[ACP] + adenosine 3',5'-bisphosphate + H(+). In terms of biological role, transfers the 4'-phosphopantetheine moiety from coenzyme A to a Ser of acyl-carrier-protein. This is Holo-[acyl-carrier-protein] synthase from Thermotoga maritima (strain ATCC 43589 / DSM 3109 / JCM 10099 / NBRC 100826 / MSB8).